The primary structure comprises 734 residues: Subtilisin-like protease SBT3.2 (734 aa).

The N-terminal stretch at 1–19 (MTRALILVAICLMLTLNNA) is a signal peptide. Residues 20-88 (AETKVHIVYL…ESTLRFYELQ (69 aa)) constitute a propeptide, activation peptide. The 490-residue stretch at 92 to 581 (TWDYLQHTSK…GGVVNSEKAA (490 aa)) folds into the Peptidase S8 domain. The N-linked (GlcNAc...) asparagine glycan is linked to asparagine 108. The Charge relay system role is filled by aspartate 122. N-linked (GlcNAc...) asparagine glycosylation occurs at asparagine 143. Histidine 179 functions as the Charge relay system in the catalytic mechanism. N-linked (GlcNAc...) asparagine glycosylation is found at asparagine 326 and asparagine 355. The region spanning 361–438 (VCEDLAKNPA…ELGTDILFYI (78 aa)) is the PA domain. Asparagine 497 carries N-linked (GlcNAc...) asparagine glycosylation. Serine 512 acts as the Charge relay system in catalysis. The N-linked (GlcNAc...) asparagine glycan is linked to asparagine 669.

This sequence belongs to the peptidase S8 family.

Its subcellular location is the secreted. This Arabidopsis thaliana (Mouse-ear cress) protein is Subtilisin-like protease SBT3.2.